The primary structure comprises 283 residues: Dihydropteroate synthase type-1 (283 aa).

Residues Val-6 to Thr-262 enclose the Pterin-binding domain. Asn-13 lines the Mg(2+) pocket. Residues Asp-86, Asn-105, Asp-177, Lys-216, and Arg-250 to His-252 contribute to the (7,8-dihydropterin-6-yl)methyl diphosphate site.

It belongs to the DHPS family. Homodimer or homotrimer. The cofactor is Mg(2+).

It catalyses the reaction (7,8-dihydropterin-6-yl)methyl diphosphate + 4-aminobenzoate = 7,8-dihydropteroate + diphosphate. It functions in the pathway cofactor biosynthesis; tetrahydrofolate biosynthesis; 7,8-dihydrofolate from 2-amino-4-hydroxy-6-hydroxymethyl-7,8-dihydropteridine diphosphate and 4-aminobenzoate: step 1/2. Its function is as follows. Catalyzes the condensation of para-aminobenzoate (pABA) with 6-hydroxymethyl-7,8-dihydropterin diphosphate (DHPt-PP) to form 7,8-dihydropteroate (H2Pte), the immediate precursor of folate derivatives. Implicated in resistance to sulfonamide. The protein is Dihydropteroate synthase type-1 (sulI) of Mycolicibacterium fortuitum (Mycobacterium fortuitum).